The primary structure comprises 156 residues: UPF0587 protein (156 aa).

Cys-32, Cys-35, Cys-64, and Cys-67 together coordinate Zn(2+).

Belongs to the UPF0587 family.

The sequence is that of UPF0587 protein from Dictyostelium discoideum (Social amoeba).